The sequence spans 150 residues: Ribonuclease K6 (150 aa).

Residues 1–23 (MVLCFPLLLLLLVLWGPVCLLHA) form the signal peptide. Histidine 38 acts as the Proton acceptor in catalysis. 4 cysteine pairs are disulfide-bonded: cysteine 46–cysteine 104, cysteine 60–cysteine 114, cysteine 78–cysteine 129, and cysteine 85–cysteine 92. Residue asparagine 55 is glycosylated (N-linked (GlcNAc...) asparagine). Substrate-binding positions include 61–65 (KHQNT) and lysine 86. A glycan (N-linked (GlcNAc...) asparagine) is linked at asparagine 100. Arginine 105 serves as a coordination point for substrate. Histidine 145 acts as the Proton donor in catalysis.

It belongs to the pancreatic ribonuclease family. In terms of assembly, interacts (via N-terminus) with bacterial lipopolysaccharide (LPS).

It is found in the secreted. The protein resides in the lysosome. It localises to the cytoplasmic granule. Its function is as follows. Ribonuclease which shows a preference for the pyrimidines uridine and cytosine. Has potent antibacterial activity against a range of Gram-positive and Gram-negative bacteria, including P.aeruginosa, A.baumanii, M.luteus, S.aureus, E.faecalis, E.faecium, S.saprophyticus and E.coli. Causes loss of bacterial membrane integrity, and also promotes agglutination of Gram-negative bacteria. Probably contributes to urinary tract sterility. Bactericidal activity is independent of RNase activity. The protein is Ribonuclease K6 (RNASE6) of Chlorocebus aethiops (Green monkey).